The primary structure comprises 61 residues: MRRGGEPQCDGREFRIASSPAREREDDNETAPPQTSAAQEPLVDCFLGTVPNSCFVRCELI.

Residues M1–E40 are disordered. The segment covering C9–E25 has biased composition (basic and acidic residues).

This is an uncharacterized protein from Caenorhabditis elegans.